A 434-amino-acid polypeptide reads, in one-letter code: MHPSTPISSLFSFTSPAVKRLLGWKQGDEEEKWAEKAVDSLVKKLKKKKGAMDELERALSCPGQPSKCVTIPRSLDGRLQVSHRKGLPHVIYCRVWRWPDLQSHHELKPLECCEFPFGSKQKEVCINPYHYRRVETPVLPPVLVPRHSEYNPQLSLLAKFRSASLHSEPLMPHNATYPDSFQQSLGPAPPSSPGHVFPQSPCPTSYPQSPGSPSESDSPYQHSDFRPVCYEEPLHWCSVAYYELNNRVGETFQASSRSVLIDGFTDPSNNRNRFCLGLLSNVNRNSTIENTRRHIGKGVHLYYVGGEVYAECVSDSSIFVQSRNCNYQHGFHPATVCKIPSGCSLKVFNNQLFAQLLAQLLAQSVHHGFEVVYELTKMCTIRMSFVKGWGAEYHRQDVTSTPCWIEIHLHGPLQWLDKVLTQMGSPHNPISSVS.

An MH1 domain is found at 16 to 140 (PAVKRLLGWK…YRRVETPVLP (125 aa)). Zn(2+)-binding residues include Cys68, Cys113, Cys125, and His130. The disordered stretch occupies residues 171 to 222 (MPHNATYPDSFQQSLGPAPPSSPGHVFPQSPCPTSYPQSPGSPSESDSPYQH). Over residues 202–221 (CPTSYPQSPGSPSESDSPYQ) the composition is skewed to polar residues. Positions 236–434 (WCSVAYYELN…SPHNPISSVS (199 aa)) constitute an MH2 domain.

The protein belongs to the dwarfin/SMAD family. In terms of assembly, interaction with the co-SMAD SMAD4. Interacts with PEBP2-alpha subunit. Interacts with RANBP3L. Phosphorylated on serine by BMP (bone morphogenetic proteins) type 1 receptor kinase. Phosphorylated by activin type I receptor-like kinase-2 (ALK-2).

It is found in the cytoplasm. Its subcellular location is the nucleus. In terms of biological role, transcriptional modulator activated by BMP (bone morphogenetic proteins) type 1 receptor kinase. SMAD9 is a receptor-regulated SMAD (R-SMAD). Has been shown to be activated by activin type I receptor-like kinase-2 (ALK-2) which stimulates heteromerization between SMAD9 and SMAD4. ALK-2 binds TGF-beta, activin and BMP. The sequence is that of Mothers against decapentaplegic homolog 9 (Smad9) from Rattus norvegicus (Rat).